The sequence spans 284 residues: D-tagatose-1,6-bisphosphate aldolase subunit GatY (284 aa).

Catalysis depends on Asp82, which acts as the Proton donor. The Zn(2+) site is built by His83 and His180. Gly181 lines the dihydroxyacetone phosphate pocket. His208 provides a ligand contact to Zn(2+). Residues 209 to 211 (GAS) and 230 to 233 (NVAT) contribute to the dihydroxyacetone phosphate site.

The protein belongs to the class II fructose-bisphosphate aldolase family. TagBP aldolase GatY subfamily. Forms a complex with GatZ. The cofactor is Zn(2+).

It carries out the reaction D-tagatofuranose 1,6-bisphosphate = D-glyceraldehyde 3-phosphate + dihydroxyacetone phosphate. The protein operates within carbohydrate metabolism; D-tagatose 6-phosphate degradation; D-glyceraldehyde 3-phosphate and glycerone phosphate from D-tagatose 6-phosphate: step 2/2. Its function is as follows. Catalytic subunit of the tagatose-1,6-bisphosphate aldolase GatYZ, which catalyzes the reversible aldol condensation of dihydroxyacetone phosphate (DHAP or glycerone-phosphate) with glyceraldehyde 3-phosphate (G3P) to produce tagatose 1,6-bisphosphate (TBP). Requires GatZ subunit for full activity and stability. Is involved in the catabolism of galactitol. The chain is D-tagatose-1,6-bisphosphate aldolase subunit GatY (gatY) from Escherichia coli.